The following is a 483-amino-acid chain: Kynureninase 1 (483 aa).

Pyridoxal 5'-phosphate is bound by residues Leu-147, Thr-148, 175-178, Ser-232, Asp-261, His-264, and Tyr-286; that span reads FPSD. Lys-287 bears the N6-(pyridoxal phosphate)lysine mark. Trp-326 and Asn-354 together coordinate pyridoxal 5'-phosphate.

This sequence belongs to the kynureninase family. In terms of assembly, homodimer. Pyridoxal 5'-phosphate serves as cofactor.

The protein localises to the cytoplasm. The catalysed reaction is L-kynurenine + H2O = anthranilate + L-alanine + H(+). It catalyses the reaction 3-hydroxy-L-kynurenine + H2O = 3-hydroxyanthranilate + L-alanine + H(+). It participates in amino-acid degradation; L-kynurenine degradation; L-alanine and anthranilate from L-kynurenine: step 1/1. The protein operates within cofactor biosynthesis; NAD(+) biosynthesis; quinolinate from L-kynurenine: step 2/3. Catalyzes the cleavage of L-kynurenine (L-Kyn) and L-3-hydroxykynurenine (L-3OHKyn) into anthranilic acid (AA) and 3-hydroxyanthranilic acid (3-OHAA), respectively. This chain is Kynureninase 1 (bna5-1), found in Aspergillus terreus (strain NIH 2624 / FGSC A1156).